Reading from the N-terminus, the 143-residue chain is Putative pre-16S rRNA nuclease (143 aa).

It belongs to the YqgF nuclease family.

It is found in the cytoplasm. Could be a nuclease involved in processing of the 5'-end of pre-16S rRNA. The polypeptide is Putative pre-16S rRNA nuclease (Lactobacillus gasseri (strain ATCC 33323 / DSM 20243 / BCRC 14619 / CIP 102991 / JCM 1131 / KCTC 3163 / NCIMB 11718 / NCTC 13722 / AM63)).